We begin with the raw amino-acid sequence, 858 residues long: GDP-fucose protein O-fucosyltransferase 2 (858 aa).

At 1–150 (MHCQLGGQAR…RPPCLLNHRR (150 aa)) the chain is on the cytoplasmic side. Residues 151–171 (LLLGLVSVLTVFLSCLPFTNA) form a helical; Signal-anchor for type II membrane protein membrane-spanning segment. Residues 172 to 858 (TVSPAALQDV…WPSLDPSSTL (687 aa)) are Lumenal-facing. Residue 237–241 (GEGFH) coordinates GDP-beta-L-fucose. The active-site Proton acceptor is the Glu-238. A disordered region spans residues 448–510 (AALTPQERQR…SRSRKEIQEE (63 aa)). Residues 486 to 510 (DGEREKRKPGRRSDTSRSRKEIQEE) show a composition bias toward basic and acidic residues. GDP-beta-L-fucose-binding positions include 646 to 648 (HLR) and 787 to 788 (RF). The segment at 819-858 (TGGQAQGKCFATKSHDPPEGRSRSELRRKYWPSLDPSSTL) is disordered. Residues 831 to 846 (KSHDPPEGRSRSELRR) show a composition bias toward basic and acidic residues.

This sequence belongs to the glycosyltransferase 68 family.

It localises to the endoplasmic reticulum membrane. The enzyme catalyses L-seryl-[protein] + GDP-beta-L-fucose = 3-O-(alpha-L-fucosyl)-L-seryl-[protein] + GDP + H(+). The catalysed reaction is L-threonyl-[protein] + GDP-beta-L-fucose = 3-O-(alpha-L-fucosyl)-L-threonyl-[protein] + GDP + H(+). The protein operates within protein modification; protein glycosylation. Its function is as follows. Catalyzes the reaction that attaches fucose through an O-glycosidic linkage to a conserved serine or threonine residue in the consensus sequence C1-X-X-S/T-C2 of thrombospondin type I repeats (TSRs) where C1 and C2 are the first and second cysteines of the repeat, respectively. O-fucosylates microneme protein MIC2 and may play a role in its stabilization. Probably by regulating protein O-fucosylation, may play a role in tachyzoite adhesion to and/or invasion of host cells; however, POFUT2 involvement in adhesion/invasion is controversial. This Toxoplasma gondii (strain ATCC 50853 / GT1) protein is GDP-fucose protein O-fucosyltransferase 2.